The sequence spans 345 residues: UDP-N-acetylenolpyruvoylglucosamine reductase (345 aa).

The FAD-binding PCMH-type domain occupies 16-186 (LSVSASCIKV…TAVGIFLKKE (171 aa)). Residue R162 is part of the active site. S232 acts as the Proton donor in catalysis. The active site involves E328.

The protein belongs to the MurB family. The cofactor is FAD.

It localises to the cytoplasm. It carries out the reaction UDP-N-acetyl-alpha-D-muramate + NADP(+) = UDP-N-acetyl-3-O-(1-carboxyvinyl)-alpha-D-glucosamine + NADPH + H(+). The protein operates within cell wall biogenesis; peptidoglycan biosynthesis. Cell wall formation. The sequence is that of UDP-N-acetylenolpyruvoylglucosamine reductase from Pectobacterium atrosepticum (strain SCRI 1043 / ATCC BAA-672) (Erwinia carotovora subsp. atroseptica).